We begin with the raw amino-acid sequence, 1020 residues long: Sodium/potassium-transporting ATPase subunit alpha-2 (1020 aa).

Residues 1–5 constitute a propeptide that is removed on maturation; that stretch reads MGRGA. The disordered stretch occupies residues 1 to 31; the sequence is MGRGAGREYSPAATTAENGGGKKKQKEKELD. The Cytoplasmic portion of the chain corresponds to 6–85; it reads GREYSPAATT…NALTPPPTTP (80 aa). Position 10 is a phosphoserine (Ser10). The tract at residues 80 to 82 is interaction with phosphoinositide-3 kinase; that stretch reads PPP. A helical transmembrane segment spans residues 86-106; sequence EWVKFCRQLFGGFSILLWIGA. At 107–129 the chain is on the extracellular side; that stretch reads ILCFLAYGIQAAMEDEPSNDNLY. Residues 130–150 form a helical membrane-spanning segment; the sequence is LGVVLAAVVIVTGCFSYYQEA. The Cytoplasmic segment spans residues 151-286; that stretch reads KSSKIMDSFK…VGRTPIAMEI (136 aa). A compositionally biased stretch (polar residues) spans 212-227; the sequence is DNSSLTGESEPQTRSP. The tract at residues 212-231 is disordered; it reads DNSSLTGESEPQTRSPEFTH. A helical membrane pass occupies residues 287–306; that stretch reads EHFIQLITGVAVFLGVSFFV. The Extracellular portion of the chain corresponds to 307-318; it reads LSLILGYSWLEA. Residues 319–336 traverse the membrane as a helical segment; that stretch reads VIFLIGIIVANVPEGLLA. Topologically, residues 337-769 are cytoplasmic; the sequence is TVTVCLTLTA…EEGRLIFDNL (433 aa). Residue Asp374 is the 4-aspartylphosphate intermediate of the active site. A phosphoserine mark is found at Ser439, Ser450, and Ser559. Thr570 is subject to Phosphothreonine. A phosphoserine mark is found at Ser587 and Ser672. The Mg(2+) site is built by Asp714 and Asp718. A helical membrane pass occupies residues 770–789; that stretch reads KKSIAYTLTSNIPEITPFLL. Topologically, residues 790-799 are extracellular; the sequence is FIIANIPLPL. The helical transmembrane segment at 800 to 820 threads the bilayer; sequence GTVTILCIDLGTDMVPAISLA. Topologically, residues 821–840 are cytoplasmic; it reads YEAAESDIMKRQPRNPQTDK. Ser826 is modified (phosphoserine). A helical transmembrane segment spans residues 841–863; the sequence is LVNERLISMAYGQIGMIQALGGF. Residues 864 to 915 are Extracellular-facing; sequence FTYFVILAENGFLPSRLLGIRLDWDDRSMNDLEDSYGQEWTYEQRKVVEFTC. The chain crosses the membrane as a helical span at residues 916-935; the sequence is HTAFFASIVVVQWADLIICK. The Cytoplasmic portion of the chain corresponds to 936–948; sequence TRRNSVFQQGMKN. Ser940 bears the Phosphoserine; by PKA mark. A helical membrane pass occupies residues 949–967; the sequence is KILIFGLLEETALAAFLSY. Residues 968–982 lie on the Extracellular side of the membrane; it reads CPGMGVALRMYPLKV. A helical transmembrane segment spans residues 983-1003; it reads TWWFCAFPYSLLIFIYDEVRK. Residues 1004–1020 lie on the Cytoplasmic side of the membrane; sequence LILRRYPGGWVEKETYY.

The protein belongs to the cation transport ATPase (P-type) (TC 3.A.3) family. Type IIC subfamily. In terms of assembly, the sodium/potassium-transporting ATPase is composed of a catalytic alpha subunit, an auxiliary non-catalytic beta subunit and an additional regulatory subunit. Interacts with regulatory subunit FXYD1.

Its subcellular location is the membrane. The protein resides in the cell membrane. The enzyme catalyses K(+)(out) + Na(+)(in) + ATP + H2O = K(+)(in) + Na(+)(out) + ADP + phosphate + H(+). Functionally, this is the catalytic component of the active enzyme, which catalyzes the hydrolysis of ATP coupled with the exchange of sodium and potassium ions across the plasma membrane. This action creates the electrochemical gradient of sodium and potassium, providing the energy for active transport of various nutrients. This is Sodium/potassium-transporting ATPase subunit alpha-2 (ATP1A2) from Sus scrofa (Pig).